The primary structure comprises 290 residues: Ribosomal RNA small subunit methyltransferase A (290 aa).

Positions 27, 29, 54, 75, 100, and 125 each coordinate S-adenosyl-L-methionine.

This sequence belongs to the class I-like SAM-binding methyltransferase superfamily. rRNA adenine N(6)-methyltransferase family. RsmA subfamily.

The protein localises to the cytoplasm. It catalyses the reaction adenosine(1518)/adenosine(1519) in 16S rRNA + 4 S-adenosyl-L-methionine = N(6)-dimethyladenosine(1518)/N(6)-dimethyladenosine(1519) in 16S rRNA + 4 S-adenosyl-L-homocysteine + 4 H(+). Specifically dimethylates two adjacent adenosines (A1518 and A1519) in the loop of a conserved hairpin near the 3'-end of 16S rRNA in the 30S particle. May play a critical role in biogenesis of 30S subunits. This chain is Ribosomal RNA small subunit methyltransferase A, found in Streptococcus pneumoniae (strain P1031).